The primary structure comprises 521 residues: Ankyrin repeat and death domain-containing protein 1B (521 aa).

10 ANK repeats span residues 60 to 89, 93 to 122, 126 to 155, 159 to 190, 194 to 223, 227 to 256, 260 to 289, 293 to 322, 326 to 355, and 359 to 388; these read AIERSFQNAAKSSNLDLMEKLFEKKVNINA, MNRTALHFAVGRNSLSAVDFLLSHKARVDV, HGLTVIHLAAWSGSFEIMLMLVKAGADQRA, EGMNALHLAAQNNNLHIVDYLIHDLHLHDLNQ, RGRKPFHLAAERGHVEMIEKLIFLNLHTSE, DGNTALHLAAMHGHSPAVQVLLTQWSEVNE, LNVSALQTATRNGHTALVNFLLGENADLQQ, SKEPPLHLAVINNRPAVVNSLLSARHDVDV, RRQTPLHVAADLGNVELVETLLKAGCNLKI, and QGKTALAVAARSQHSLVVDMLIKAERYYAW. One can recognise a Death domain in the interval 420–508; the sequence is TLLWNLAYRQ…ELAEKIRQFK (89 aa).

This Mus musculus (Mouse) protein is Ankyrin repeat and death domain-containing protein 1B (Ankdd1b).